A 314-amino-acid polypeptide reads, in one-letter code: Malate dehydrogenase (314 aa).

NAD(+) is bound by residues 11–16 (GSGNIG) and aspartate 35. Substrate-binding residues include arginine 84 and arginine 90. Residues asparagine 97 and 120-122 (ITN) contribute to the NAD(+) site. The substrate site is built by asparagine 122 and arginine 153. Histidine 177 serves as the catalytic Proton acceptor.

This sequence belongs to the LDH/MDH superfamily. MDH type 3 family.

It catalyses the reaction (S)-malate + NAD(+) = oxaloacetate + NADH + H(+). Its function is as follows. Catalyzes the reversible oxidation of malate to oxaloacetate. This Rickettsia felis (strain ATCC VR-1525 / URRWXCal2) (Rickettsia azadi) protein is Malate dehydrogenase.